The following is a 265-amino-acid chain: Eukaryotic translation initiation factor 3 subunit J (265 aa).

Over residues 24–34 the composition is skewed to acidic residues; the sequence is AGDEPILDSWD. The disordered stretch occupies residues 24–74; that stretch reads AGDEPILDSWDEEPKAKKEAAKPKPKPKAGGKKNAKGEEKKEQVLAIDELD. Residues 35–45 are compositionally biased toward basic and acidic residues; the sequence is EEPKAKKEAAK. Positions 46–57 are enriched in basic residues; it reads PKPKPKAGGKKN. 2 coiled-coil regions span residues 78 to 106 and 190 to 220; these read RKELMKKAELESDLNNAADLLGDLEMAEE and IENIRQTVATLNILIKDKEKAERQARLARVK.

It belongs to the eIF-3 subunit J family. Component of the eukaryotic translation initiation factor 3 (eIF-3) complex.

It is found in the cytoplasm. In terms of biological role, component of the eukaryotic translation initiation factor 3 (eIF-3) complex, which is involved in protein synthesis of a specialized repertoire of mRNAs and, together with other initiation factors, stimulates binding of mRNA and methionyl-tRNAi to the 40S ribosome. The eIF-3 complex specifically targets and initiates translation of a subset of mRNAs involved in cell proliferation. The chain is Eukaryotic translation initiation factor 3 subunit J from Candida glabrata (strain ATCC 2001 / BCRC 20586 / JCM 3761 / NBRC 0622 / NRRL Y-65 / CBS 138) (Yeast).